Here is a 232-residue protein sequence, read N- to C-terminus: Flagellar L-ring protein (232 aa).

A signal peptide spans 1–21; the sequence is MQKNAAHTYAISSLLVLSLTG. C22 is lipidated: N-palmitoyl cysteine. C22 carries the S-diacylglycerol cysteine lipid modification.

This sequence belongs to the FlgH family. The basal body constitutes a major portion of the flagellar organelle and consists of four rings (L,P,S, and M) mounted on a central rod.

The protein localises to the cell outer membrane. The protein resides in the bacterial flagellum basal body. Assembles around the rod to form the L-ring and probably protects the motor/basal body from shearing forces during rotation. This Escherichia coli O6:H1 (strain CFT073 / ATCC 700928 / UPEC) protein is Flagellar L-ring protein.